The primary structure comprises 207 residues: Thymidylate kinase (207 aa).

7–14 (GCEGTGKT) is a binding site for ATP.

This sequence belongs to the thymidylate kinase family.

The catalysed reaction is dTMP + ATP = dTDP + ADP. Its function is as follows. Phosphorylation of dTMP to form dTDP in both de novo and salvage pathways of dTTP synthesis. This Onion yellows phytoplasma (strain OY-M) protein is Thymidylate kinase.